We begin with the raw amino-acid sequence, 243 residues long: MNSSQDNLFAKPYEHVSDFQFDDKVAGVFNDMIRRSVPGYGQIINTIGDLAQKYATPNSKIYDLGCSLGAATLSIRRRVEGRNCQIIAIDNSESMIERCNENLSAYVSETPVELVCGDIRDIKIENASLVVLNFTMQFLAPSDRESLLKNIYQGLVPGGLLVLSEKLYFKEDNIQTTLDDLHLDFKRANGYSELEISQKRSSLENVMKPDTLVEHENRIRAQGFSQFSVWFQCFNFASMVAIK.

S-adenosyl-L-methionine-binding positions include Y40, 65-67 (GCS), 90-91 (DN), 118-119 (DI), N133, and R200.

This sequence belongs to the class I-like SAM-binding methyltransferase superfamily. Cx-SAM synthase family. Homodimer.

It catalyses the reaction prephenate + S-adenosyl-L-methionine = carboxy-S-adenosyl-L-methionine + 3-phenylpyruvate + H2O. Its function is as follows. Catalyzes the conversion of S-adenosyl-L-methionine (SAM) to carboxy-S-adenosyl-L-methionine (Cx-SAM). This is Carboxy-S-adenosyl-L-methionine synthase from Shewanella pealeana (strain ATCC 700345 / ANG-SQ1).